A 148-amino-acid polypeptide reads, in one-letter code: FAD synthase (148 aa).

ATP is bound by residues 5 to 6 (TF), 10 to 13 (HPGH), D92, and Y119.

The protein belongs to the archaeal FAD synthase family. Homodimer. It depends on a divalent metal cation as a cofactor.

The enzyme catalyses FMN + ATP + H(+) = FAD + diphosphate. It participates in cofactor biosynthesis; FAD biosynthesis; FAD from FMN: step 1/1. Catalyzes the transfer of the AMP portion of ATP to flavin mononucleotide (FMN) to produce flavin adenine dinucleotide (FAD) coenzyme. This chain is FAD synthase, found in Methanosphaera stadtmanae (strain ATCC 43021 / DSM 3091 / JCM 11832 / MCB-3).